We begin with the raw amino-acid sequence, 339 residues long: MNKTAEDLLDSLKCASKDLSSALTSVTIKFNCIFISTIVLISYCFILLAIQALLRHNIFSNSTRLILIVCLLNSVVHQTTMMETRVRQIYRSFLFASDPCKLLYRSSDCVVDLYFFFLTGYFSTYSVFSLTSDRLVSHYKSKFYHTHQYFIAISLLVIQLLLTLVSFYIAFYGVSLAGYVSVCIQYPKAAVQYGTINTVRTMVMVCCLIVTGFTYYLSVKSEKQIQKISYSPGERYSAYENITTSQSVCIFIILQLSCVMLTSIGMNLLLMMGEAMSEGTFTTIALFLPGITYANLCLPLVIYFKTKLTIRNRKFRIAVMTSMYGDAGEHIARLKKSWE.

Transmembrane regions (helical) follow at residues 33–53, 110–130, 150–170, 199–219, 250–270, and 284–304; these read IFIS…IQAL, VVDL…VFSL, FIAI…FYIA, VRTM…YLSV, IFII…NLLL, and IALF…VIYF.

It belongs to the nematode receptor-like protein sra family.

It localises to the membrane. In Caenorhabditis elegans, this protein is Serpentine receptor class alpha-22 (sra-22).